The chain runs to 336 residues: Protein SGT1 homolog (336 aa).

A2 carries the post-translational modification N-acetylalanine. TPR repeat units follow at residues 11-44 (SQRLFQSFSDALIDGDPQAALEELTKALEQNPDD), 45-78 (AQYYCQRAYCHILLGKYRDGIADVKKSLELNPNN), and 79-112 (CTALLRKGICEYHEKDYASALETFAEGQKLDSTD). In terms of domain architecture, CS spans 140–229 (QSKIKYDWYQ…PEAVRWEKLE (90 aa)). T236 carries the phosphothreonine modification. Positions 247–336 (MYPSSSHYTR…PPDDMEWKQY (90 aa)) constitute an SGS domain. A Phosphoserine modification is found at S252. T255 carries the phosphothreonine modification. K266 participates in a covalent cross-link: Glycyl lysine isopeptide (Lys-Gly) (interchain with G-Cter in SUMO1); alternate. A Glycyl lysine isopeptide (Lys-Gly) (interchain with G-Cter in SUMO2); alternate cross-link involves residue K266. S302 carries the post-translational modification Phosphoserine.

The protein belongs to the SGT1 family. In terms of assembly, probably associates with SCF (SKP1-CUL1-F-box protein) complex through interaction with SKP1. Interacts with S100A6. Interacts with HSP90. Phosphorylated at Ser-252 and Ser-302, dephosphorylation promotes nuclear translocation, most likely due to disruption of the SUGT1-HSP90 complex.

Its subcellular location is the cytoplasm. The protein resides in the nucleus. In terms of biological role, may play a role in ubiquitination and subsequent proteasomal degradation of target proteins. In Mus musculus (Mouse), this protein is Protein SGT1 homolog.